The chain runs to 505 residues: Probable bifunctional methylthioribulose-1-phosphate dehydratase/enolase-phosphatase E1 (505 aa).

The methylthioribulose-1-phosphate dehydratase stretch occupies residues 1–237; that stretch reads MGLDKDGISN…ALKLHQLGLD (237 aa). Cys-109 is a binding site for substrate. Zn(2+) is bound by residues His-127 and His-129. The active-site Proton donor/acceptor; for methylthioribulose-1-phosphate dehydratase activity is Glu-152. His-202 contacts Zn(2+). Positions 266–505 are enolase-phosphatase E1; that stretch reads FVLDIEGTTT…FRTAKSLLEL (240 aa). Mg(2+)-binding residues include Asp-269 and Glu-271. Substrate contacts are provided by residues 404 to 405 and Lys-438; that span reads SS. Position 464 (Asp-464) interacts with Mg(2+).

It in the N-terminal section; belongs to the aldolase class II family. MtnB subfamily. The protein in the C-terminal section; belongs to the HAD-like hydrolase superfamily. MasA/MtnC family. The cofactor is Zn(2+). Mg(2+) serves as cofactor.

The enzyme catalyses 5-(methylsulfanyl)-D-ribulose 1-phosphate = 5-methylsulfanyl-2,3-dioxopentyl phosphate + H2O. It catalyses the reaction 5-methylsulfanyl-2,3-dioxopentyl phosphate + H2O = 1,2-dihydroxy-5-(methylsulfanyl)pent-1-en-3-one + phosphate. Its pathway is amino-acid biosynthesis; L-methionine biosynthesis via salvage pathway; L-methionine from S-methyl-5-thio-alpha-D-ribose 1-phosphate: step 2/6. It participates in amino-acid biosynthesis; L-methionine biosynthesis via salvage pathway; L-methionine from S-methyl-5-thio-alpha-D-ribose 1-phosphate: step 3/6. It functions in the pathway amino-acid biosynthesis; L-methionine biosynthesis via salvage pathway; L-methionine from S-methyl-5-thio-alpha-D-ribose 1-phosphate: step 4/6. The chain is Probable bifunctional methylthioribulose-1-phosphate dehydratase/enolase-phosphatase E1 from Physcomitrium patens (Spreading-leaved earth moss).